The chain runs to 342 residues: UHRF1-like protein (342 aa).

Positions 41–149 (SEATTLATPS…SHPGSEEEDI (109 aa)) are disordered. Over residues 42–59 (EATTLATPSNLKTAGNQR) the composition is skewed to polar residues. Basic and acidic residues predominate over residues 74-90 (NRSDSPRKRPTKDREDL). The segment covering 115–141 (TREQVTFNSDRDTPNTPSRQIKSTHSH) has biased composition (polar residues). Residues 168 to 322 (GHIPGIGVGK…LMVCRYAFKR (155 aa)) form the YDG domain. Asp218 contacts DNA. The segment at 236–257 (KGTKQNPKNLRTAPQTSHQSFD) is disordered. Over residues 238 to 257 (TKQNPKNLRTAPQTSHQSFD) the composition is skewed to polar residues.

The protein localises to the nucleus. Involved in the maintenance of DNA methylation. Binds hemimethylated DNA. The polypeptide is UHRF1-like protein (Cryptococcus neoformans var. grubii serotype A (strain H99 / ATCC 208821 / CBS 10515 / FGSC 9487) (Filobasidiella neoformans var. grubii)).